The sequence spans 329 residues: UPF0421 protein SH1063 (329 aa).

The next 5 membrane-spanning stretches (helical) occupy residues L25–I45, L60–P80, F87–V107, A108–F128, and L131–P151.

This sequence belongs to the UPF0421 family.

The protein resides in the cell membrane. The sequence is that of UPF0421 protein SH1063 from Staphylococcus haemolyticus (strain JCSC1435).